Here is a 196-residue protein sequence, read N- to C-terminus: Putative NADH dehydrogenase/NAD(P)H nitroreductase SGR_2476 (196 aa).

The protein belongs to the nitroreductase family. HadB/RutE subfamily. The cofactor is FMN.

The protein is Putative NADH dehydrogenase/NAD(P)H nitroreductase SGR_2476 of Streptomyces griseus subsp. griseus (strain JCM 4626 / CBS 651.72 / NBRC 13350 / KCC S-0626 / ISP 5235).